A 255-amino-acid chain; its full sequence is Protein SCO2 homolog, mitochondrial (255 aa).

The N-terminal 41 residues, 1 to 41 (MLLALGPKAWPKLSQFKPLLRISGGETLHRNSRHWAGQGQR), are a transit peptide targeting the mitochondrion. Topologically, residues 42–49 (QGPGLRTR) are mitochondrial matrix. A helical transmembrane segment spans residues 50–67 (LLITALFGAGLGWAWLAA). The Mitochondrial intermembrane portion of the chain corresponds to 68–255 (RAEKEQWRQQ…HIAAFHSVLP (188 aa)). Residues 74–248 (WRQQQRTEAL…IVESIRRHIA (175 aa)) enclose the Thioredoxin domain. Residues Cys-122, Cys-126, and His-213 each contribute to the Cu cation site. Cys-122 and Cys-126 form a disulfide bridge.

Belongs to the SCO1/2 family. In terms of assembly, homodimer. Interacts with COA6. Found in a complex with TMEM177, COX20, COA6, MT-CO2/COX2, COX18 and SCO1. Interacts with TMEM177 in a COX20-dependent manner. Interacts with COX20 in a MT-CO2/COX2- and COX18-dependent manner. Interacts with COX16. In terms of tissue distribution, expressed in retina, retinal pigment epithelium, and sclera.

The protein resides in the mitochondrion inner membrane. In terms of biological role, copper metallochaperone essential for the synthesis and maturation of cytochrome c oxidase subunit II (MT-CO2/COX2) by facilitating the incorporation of copper into the Cu(A) site of MT-CO2/COX2. Could also act as a thiol-disulfide oxidoreductase to regulate the redox state of the cysteines in SCO1 during maturation of MT-CO2/COX2. The chain is Protein SCO2 homolog, mitochondrial (Sco2) from Mus musculus (Mouse).